Here is a 312-residue protein sequence, read N- to C-terminus: MTRHFLRDDDLSPAEQVEVLDLAAKLKRDRFSARPLAGPQTVAVMFDKTSTRTRLSFATGIADLGGNPLIIQAGESQVGAKESLADTARVMERMLAAIVWRTFAHSGLEELVDGTRIPVVNALSDDVHPCQTLADLQTVRERKGRTAGLTMSFFGDGASNMAHSSLLGGVTAGMRVRIAAPAGYTPDPRFVADAEAIAARTGGSVLVTADPGEAAAGADVIVTDTWVSMGKEDEKAERIAVFGDYAVNAGTLRLADPAAIFLHCLPAYRGLEVSAYVIDGPQSVVWDEAENRLHAQKALLTWLLAKNREDAV.

Residues 50-53, Q77, R101, and 128-131 contribute to the carbamoyl phosphate site; these read STRT and HPCQ. L-ornithine contacts are provided by residues N160, D224, and 228–229; that span reads SM. Carbamoyl phosphate contacts are provided by residues 264–265 and R292; that span reads CL.

This sequence belongs to the aspartate/ornithine carbamoyltransferase superfamily. OTCase family.

It is found in the cytoplasm. It carries out the reaction carbamoyl phosphate + L-ornithine = L-citrulline + phosphate + H(+). The protein operates within amino-acid biosynthesis; L-arginine biosynthesis; L-arginine from L-ornithine and carbamoyl phosphate: step 1/3. Its function is as follows. Reversibly catalyzes the transfer of the carbamoyl group from carbamoyl phosphate (CP) to the N(epsilon) atom of ornithine (ORN) to produce L-citrulline. The protein is Ornithine carbamoyltransferase of Leifsonia xyli subsp. xyli (strain CTCB07).